The chain runs to 702 residues: Rho GTPase-activating protein 22 (702 aa).

The PH domain maps to 43 to 151; sequence PVLKAGWLRK…WVQAIRRVIW (109 aa). One can recognise a Rho-GAP domain in the interval 161–355; it reads QRLEDTVHHE…VLIRKHGQLF (195 aa). Disordered regions lie at residues 360-433, 438-457, 480-511, and 555-596; these read LEEP…HTLP, SFRQ…SSLE, RASS…FSST, and PSPL…TQAH. Phosphoserine occurs at positions 365 and 397. Composition is skewed to polar residues over residues 407–421, 438–456, 491–504, and 581–594; these read SRTS…TGPA, SFRQ…NSSL, GSAQ…NVPP, and SGSS…SPTQ. A coiled-coil region spans residues 594–691; that stretch reads QAHVRRCRAL…EEFFSTLGSL (98 aa).

In terms of assembly, interacts with VEZF1. As to expression, predominantly present in endothelial cells (at protein level).

The protein localises to the cytoplasm. The protein resides in the nucleus. Its function is as follows. Rho GTPase-activating protein involved in the signal transduction pathway that regulates endothelial cell capillary tube formation during angiogenesis. Acts as a GTPase activator for the RAC1 by converting it to an inactive GDP-bound state. Inhibits RAC1-dependent lamellipodia formation. May also play a role in transcription regulation via its interaction with VEZF1, by regulating activity of the endothelin-1 (EDN1) promoter. This chain is Rho GTPase-activating protein 22 (Arhgap22), found in Mus musculus (Mouse).